The following is a 132-amino-acid chain: Precursor of CEP10 (132 aa).

A signal peptide spans 1–19 (MKLFIIIVVTSLTISKVFD). Positions 20–66 (KTLVTIEARNLRKMDRHEHFNANEDFVEAKMLKKIDNKNNLNNRCIN) are excised as a propeptide. Hydroxyproline occurs at positions 70 and 73. Positions 82–91 (PKVINNKFTK) are excised as a propeptide. 3 positions are modified to hydroxyproline: P95, P98, and P102. Residues 107-116 (LRVVNNKFTN) constitute a propeptide that is removed on maturation. Hydroxyproline occurs at positions 120, 123, and 127. Residue P132 is a propeptide.

It belongs to the C-terminally encoded plant signaling peptide (CEP) family. As to quaternary structure, interacts with CEP receptors (e.g. CEPR1 and CEPR2). In terms of processing, the mature small signaling peptide is generated by proteolytic processing of the longer precursor.

The protein localises to the secreted. It localises to the extracellular space. Its subcellular location is the apoplast. Functionally, extracellular signaling peptide that may regulate primary root growth rate and systemic nitrogen (N)-demand signaling. The sequence is that of Precursor of CEP10 from Arabidopsis thaliana (Mouse-ear cress).